The sequence spans 599 residues: Tryptophan 2-C-methyltransferase (599 aa).

The 146-residue stretch at 4-149 (KGTVALINPN…RALAEGRSAD (146 aa)) folds into the B12-binding domain. The segment at 167–197 (RVAPPALDPRAAPAPSSSPSPSPAPSSSSAP) is disordered. Residues 168-181 (VAPPALDPRAAPAP) show a composition bias toward low complexity. The Radical SAM core domain occupies 239 to 492 (YREGGLGSIL…IEYERQFMFD (254 aa)). [4Fe-4S] cluster contacts are provided by cysteine 253, cysteine 257, and cysteine 260.

The cofactor is [4Fe-4S] cluster. Cob(II)alamin serves as cofactor.

The catalysed reaction is L-tryptophan + S-adenosyl-L-methionine = 2-methyl-L-tryptophan + S-adenosyl-L-homocysteine + H(+). Functionally, involved in the biosynthetic pathway of the antibiotic thiostrepton A. First, TsrM catalyzes the transfer of a methyl group from S-adenosyl methionine (SAM) to cobalamin, leading to the formation of methylcobalamin (CH3-cobalamin) and S-adenosyl-L-homocysteine (SAH). Then the methyl group is transferred to the C2 position of tryptophan (Trp) with the concerted action of the radical SAM [4Fe-4S] center, leading to the production of methyltryptophan. The chain is Tryptophan 2-C-methyltransferase from Streptomyces laurentii.